The following is a 154-amino-acid chain: Large ribosomal subunit protein uL13 (154 aa).

It belongs to the universal ribosomal protein uL13 family. In terms of assembly, part of the 50S ribosomal subunit.

Functionally, this protein is one of the early assembly proteins of the 50S ribosomal subunit, although it is not seen to bind rRNA by itself. It is important during the early stages of 50S assembly. This chain is Large ribosomal subunit protein uL13, found in Rhizobium rhizogenes (strain K84 / ATCC BAA-868) (Agrobacterium radiobacter).